We begin with the raw amino-acid sequence, 590 residues long: tRNA-guanine(15) transglycosylase (590 aa).

D90 acts as the Nucleophile in catalysis. Residue D125 coordinates substrate. C278, C280, and C283 together coordinate Zn(2+). One can recognise a PUA domain in the interval 502 to 577 (KGRVVVKGLF…HPFIIIRRHV (76 aa)).

It belongs to the archaeosine tRNA-ribosyltransferase family. It depends on Zn(2+) as a cofactor.

The enzyme catalyses guanosine(15) in tRNA + 7-cyano-7-deazaguanine = 7-cyano-7-carbaguanosine(15) in tRNA + guanine. It functions in the pathway tRNA modification; archaeosine-tRNA biosynthesis. Exchanges the guanine residue with 7-cyano-7-deazaguanine (preQ0) at position 15 in the dihydrouridine loop (D-loop) of archaeal tRNAs. This chain is tRNA-guanine(15) transglycosylase, found in Korarchaeum cryptofilum (strain OPF8).